Reading from the N-terminus, the 170-residue chain is Thialysine N-epsilon-acetyltransferase (170 aa).

In terms of domain architecture, N-acetyltransferase spans 4-166 (VMIREAKEGD…FRFEGEAMRE (163 aa)). A substrate-binding site is contributed by 27 to 28 (YE). Lys29 is modified (N6-acetyllysine). Substrate is bound at residue Glu92. Residues 94 to 96 (IYV), 102 to 107 (GQGIGS), 133 to 135 (NKR), and Tyr140 contribute to the acetyl-CoA site. The active-site Proton donor is Tyr140. Glu152 serves as a coordination point for substrate.

Belongs to the acetyltransferase family. Homodimer.

It localises to the cytoplasm. It carries out the reaction S-(2-aminoethyl)-L-cysteine + acetyl-CoA = S-(2-acetamidoethyl)-L-cysteine + CoA + H(+). It catalyses the reaction an alkane-alpha,omega-diamine + acetyl-CoA = an N-acetylalkane-alpha,omega-diamine + CoA + H(+). Catalyzes the N-acetylation of the amino acid thialysine (S-(2-aminoethyl)-L-cysteine), a L-lysine analog with the 4-methylene group substituted with a sulfur. May also catalyze acetylation of polyamines, such as norspermidine, spermidine or spermine. However, ability to acetylate polyamines is weak, suggesting that it does not act as a diamine acetyltransferase in vivo. The chain is Thialysine N-epsilon-acetyltransferase from Bos taurus (Bovine).